The following is a 399-amino-acid chain: S-adenosylmethionine synthase (399 aa).

His-17 contributes to the ATP binding site. Position 19 (Asp-19) interacts with Mg(2+). Glu-45 is a K(+) binding site. L-methionine is bound by residues Glu-58 and Gln-101. Positions 101-111 (QSPDIAQGVDE) are flexible loop. ATP is bound by residues 177-179 (DAK), 244-245 (RF), Asp-253, 259-260 (RK), Ala-276, and Lys-280. Asp-253 is an L-methionine binding site. Lys-284 lines the L-methionine pocket.

It belongs to the AdoMet synthase family. In terms of assembly, homotetramer; dimer of dimers. It depends on Mg(2+) as a cofactor. K(+) is required as a cofactor.

It is found in the cytoplasm. The enzyme catalyses L-methionine + ATP + H2O = S-adenosyl-L-methionine + phosphate + diphosphate. It participates in amino-acid biosynthesis; S-adenosyl-L-methionine biosynthesis; S-adenosyl-L-methionine from L-methionine: step 1/1. Catalyzes the formation of S-adenosylmethionine (AdoMet) from methionine and ATP. The overall synthetic reaction is composed of two sequential steps, AdoMet formation and the subsequent tripolyphosphate hydrolysis which occurs prior to release of AdoMet from the enzyme. In Listeria welshimeri serovar 6b (strain ATCC 35897 / DSM 20650 / CCUG 15529 / CIP 8149 / NCTC 11857 / SLCC 5334 / V8), this protein is S-adenosylmethionine synthase.